Reading from the N-terminus, the 294-residue chain is tRNA dimethylallyltransferase (294 aa).

Residue 9–16 coordinates ATP; that stretch reads GATATGKS. Residue 11 to 16 coordinates substrate; that stretch reads TATGKS. Positions 34–37 are interaction with substrate tRNA; that stretch reads DSRQ.

Belongs to the IPP transferase family. As to quaternary structure, monomer. Requires Mg(2+) as cofactor.

The catalysed reaction is adenosine(37) in tRNA + dimethylallyl diphosphate = N(6)-dimethylallyladenosine(37) in tRNA + diphosphate. In terms of biological role, catalyzes the transfer of a dimethylallyl group onto the adenine at position 37 in tRNAs that read codons beginning with uridine, leading to the formation of N6-(dimethylallyl)adenosine (i(6)A). The chain is tRNA dimethylallyltransferase from Trichormus variabilis (strain ATCC 29413 / PCC 7937) (Anabaena variabilis).